The following is a 479-amino-acid chain: MAQHTVYFPDAFLTQMREAMPSTLSFDDFLAACQRPLRRSIRVNTLKTSVADFLQLTAPYGWTLTPIPWCEEGFWIERDNEDALPLGSTAEHLSGLFYIQEASSMLPVAALFADGNAPQRVMDVAAAPGSKTTQIAARMNNEGAILANEFSASRVKVLHANISRCGISNVALTHFDGRVFGAAVPEMFDAILLDAPCSGEGVVRKDPDALKNWSPESNQEIAATQRELIDSAFHALRPGGTLVYSTCTLNREENEAVCLWLKETYHDAVEFLPLGDLFPGANKALTEDGFLHVFPQIYDCEGFFVARLRKTQAIPVLPAPKYKVGNFPFSPVKDREAGQIRQAAASVGLNWDENLRLWQRDKELWLFPVGIEALIGKVRFSRLGIKLAETHNKGYRWQHEAVIALASPDNVNAFELTPQEAEEWYRGRDVYPQAAPVADDVLVTFQHQPIGLAKRIGSRLKNSYPRELVRDGKLFTGNA.

Residues 125–131 (AAAPGSK), Glu-149, Asp-176, and Asp-194 contribute to the S-adenosyl-L-methionine site. The active-site Nucleophile is the Cys-247.

It belongs to the class I-like SAM-binding methyltransferase superfamily. RsmB/NOP family.

The protein resides in the cytoplasm. It catalyses the reaction cytidine(1407) in 16S rRNA + S-adenosyl-L-methionine = 5-methylcytidine(1407) in 16S rRNA + S-adenosyl-L-homocysteine + H(+). Specifically methylates the cytosine at position 1407 (m5C1407) of 16S rRNA. This chain is Ribosomal RNA small subunit methyltransferase F, found in Escherichia coli O6:H1 (strain CFT073 / ATCC 700928 / UPEC).